Here is a 334-residue protein sequence, read N- to C-terminus: Cytoskeleton protein RodZ (334 aa).

The Cytoplasmic portion of the chain corresponds to 1–111 (MNTEATHDQN…LGKRRKKRDG (111 aa)). Residues 19-71 (LRNAREQLGLSQQAVAERLCLKVSTVRDIEEDKAPSDLASTFLRGYIRSYARL) form the HTH cro/C1-type domain. The H-T-H motif DNA-binding region spans 30-49 (QQAVAERLCLKVSTVRDIEE). The helical; Signal-anchor for type II membrane protein transmembrane segment at 112-132 (WLMSFTWLVLFVVVGLTGAWW) threads the bilayer. The Periplasmic segment spans residues 133–334 (WQNHKAQQEE…TLNAEPTPAQ (202 aa)). A disordered region spans residues 155 to 241 (NADKDSGQSV…PSALPTSQAG (87 aa)). Low complexity-rich tracts occupy residues 170–211 (AATS…TVVA) and 219–241 (TAATSAAPAATETPSALPTSQAG).

Belongs to the RodZ family.

Its subcellular location is the cell inner membrane. Functionally, cytoskeletal protein that is involved in cell-shape control through regulation of the length of the long axis. The chain is Cytoskeleton protein RodZ from Salmonella agona (strain SL483).